The following is a 218-amino-acid chain: Ohanin-like protein (218 aa).

The signal sequence occupies residues 1-40; sequence MSPSAGFQFSLYFLQTKKVLWKLTGLCYILLFTLCFFADQ. Positions 41–48 are excised as a propeptide; sequence ENGGKALA. Residues 49 to 155 enclose the B30.2/SPRY domain; it reads SPPGIWKRAD…RIWQTGLWWL (107 aa). Positions 156–218 are excised as a propeptide; it reads RHLETDPGRV…LGGTVSLTTL (63 aa).

Belongs to the ohanin/vespryn family. As to expression, expressed by the venom gland.

It localises to the secreted. Its function is as follows. Neurotoxin that produces dose-dependent hypolocomotion and hyperalgesia in mice. May directly act on the central nervous system, as it is 6500-fold more potent when administered intracerebroventricularly than intraperitoneal. This Lachesis muta muta (Bushmaster) protein is Ohanin-like protein.